Reading from the N-terminus, the 217-residue chain is Probable GTP-binding protein EngB (217 aa).

The EngB-type G domain occupies 31–205 (VGVEIAFAGR…LAILDAWCHP (175 aa)). Residues 39-46 (GRSNAGKS), 66-70 (GRTQL), 84-87 (DLPG), 151-154 (TKAD), and 184-186 (FSA) contribute to the GTP site. Mg(2+)-binding residues include serine 46 and threonine 68.

It belongs to the TRAFAC class TrmE-Era-EngA-EngB-Septin-like GTPase superfamily. EngB GTPase family. Mg(2+) serves as cofactor.

Its function is as follows. Necessary for normal cell division and for the maintenance of normal septation. In Shewanella amazonensis (strain ATCC BAA-1098 / SB2B), this protein is Probable GTP-binding protein EngB.